A 217-amino-acid chain; its full sequence is Protein matrimony (217 aa).

The POLO box domain (PBD)-binding signature appears at 39-41; sequence STP. Ser63 and Ser66 each carry phosphoserine. Residues 83-106 are disordered; that stretch reads KQQQQQQHQHCHRTQLKPPPFVLP. An SAM domain is found at 157–217; it reads NHAANVEQIL…NRIMDVLHTL (61 aa).

As to quaternary structure, interacts with polo. Interacts with cort. In terms of processing, probably ubiquitinated: degraded during the oocyte-to-embryo transition by the anaphase promoting complex/cyclosome (APC/C) containing cort protein.

Its subcellular location is the nucleus. It is found in the chromosome. In terms of biological role, polo kinase inhibitor required to maintain G2 arrest in the meiotic cell cycle in females. Holds heterochromatically paired homologs together from the end of pachytene until metaphase I. Haploinsufficient locus for homologous achiasmate segregation and may be required for the maintenance of heterochromatic pairings. This chain is Protein matrimony, found in Drosophila melanogaster (Fruit fly).